The primary structure comprises 122 residues: Large ribosomal subunit protein uL14 (122 aa).

The protein belongs to the universal ribosomal protein uL14 family. As to quaternary structure, part of the 50S ribosomal subunit. Forms a cluster with proteins L3 and L19. In the 70S ribosome, L14 and L19 interact and together make contacts with the 16S rRNA in bridges B5 and B8.

Functionally, binds to 23S rRNA. Forms part of two intersubunit bridges in the 70S ribosome. This is Large ribosomal subunit protein uL14 from Ruthia magnifica subsp. Calyptogena magnifica.